Here is a 506-residue protein sequence, read N- to C-terminus: NAD(P)H-quinone oxidoreductase subunit 2 (506 aa).

A run of 14 helical transmembrane segments spans residues 14–34, 42–62, 79–99, 108–128, 132–152, 167–187, 206–226, 240–260, 276–296, 302–322, 330–350, 374–394, 409–429, and 462–482; these read AIIP…VDLA, WAPV…ALQW, LAIA…LISW, PIGE…LLCG, LVSV…LSGY, LLVG…LYGL, FITS…IAAV, PTPV…AFAI, LLFT…ALAQ, MLAY…VSGT, VLYL…VILF, LGLS…GFFG, LLVV…ISVI, and IALY…NPLF.

The protein belongs to the complex I subunit 2 family. NDH-1 can be composed of about 15 different subunits; different subcomplexes with different compositions have been identified which probably have different functions.

It localises to the cellular thylakoid membrane. It catalyses the reaction a plastoquinone + NADH + (n+1) H(+)(in) = a plastoquinol + NAD(+) + n H(+)(out). The enzyme catalyses a plastoquinone + NADPH + (n+1) H(+)(in) = a plastoquinol + NADP(+) + n H(+)(out). In terms of biological role, NDH-1 shuttles electrons from an unknown electron donor, via FMN and iron-sulfur (Fe-S) centers, to quinones in the respiratory and/or the photosynthetic chain. The immediate electron acceptor for the enzyme in this species is believed to be plastoquinone. Couples the redox reaction to proton translocation, and thus conserves the redox energy in a proton gradient. Cyanobacterial NDH-1 also plays a role in inorganic carbon-concentration. This is NAD(P)H-quinone oxidoreductase subunit 2 from Prochlorococcus marinus subsp. pastoris (strain CCMP1986 / NIES-2087 / MED4).